A 291-amino-acid polypeptide reads, in one-letter code: Lys-63-specific deubiquitinase BRCC36 (291 aa).

A2 is subject to N-acetylalanine. The region spanning 12–179 (VHLESDAFLV…YTCFQSIQAQ (168 aa)) is the MPN domain. Zn(2+) is bound by residues H122, H124, and D135. The short motif at 122–135 (HSHPHITVWPSHVD) is the JAMM motif element. S233 is subject to Phosphoserine.

This sequence belongs to the peptidase M67A family. BRCC36 subfamily. In terms of assembly, component of the ARISC complex, at least composed of UIMC1/RAP80, ABRAXAS1, BRCC3/BRCC36, BABAM2 and BABAM1/NBA1. Component of the BRCA1-A complex, at least composed of BRCA1, BARD1, UIMC1/RAP80, ABRAXAS1, BRCC3/BRCC36, BABAM2 and BABAM1/NBA1. In the BRCA1-A complex, interacts directly with ABRAXAS1 and BABAM2. Component of the BRISC complex, at least composed of ABRAXAS2, BRCC3/BRCC36, BABAM2 and BABAM1/NBA1. Identified in a complex with SHMT2 and the other subunits of the BRISC complex. In the BRISC complex, interacts directly with ABRAXAS2. Identified in a complex with ABRAXAS2 and NUMA1. The BRISC complex interacts with the CSN complex. Component of the BRCA1/BRCA2 containing complex (BRCC), which also contains BRCA1, BRCA2, BARD1, BABAM2 and RAD51. BRCC is a ubiquitin E3 ligase complex that enhances cellular survival following DNA damage. Interacts with BRCA1. Binds polyubiquitin. Interacts with PWWP2B. Interacts with HDAC1; this interaction is enhanced in the presence of PWWP2B. Zn(2+) is required as a cofactor.

The protein localises to the nucleus. Its subcellular location is the cytoplasm. It is found in the cytoskeleton. It localises to the spindle pole. Metalloprotease that specifically cleaves 'Lys-63'-linked polyubiquitin chains. Does not have activity toward 'Lys-48'-linked polyubiquitin chains. Component of the BRCA1-A complex, a complex that specifically recognizes 'Lys-63'-linked ubiquitinated histones H2A and H2AX at DNA lesions sites, leading to target the BRCA1-BARD1 heterodimer to sites of DNA damage at double-strand breaks (DSBs). In the BRCA1-A complex, it specifically removes 'Lys-63'-linked ubiquitin on histones H2A and H2AX, antagonizing the RNF8-dependent ubiquitination at double-strand breaks (DSBs). Catalytic subunit of the BRISC complex, a multiprotein complex that specifically cleaves 'Lys-63'-linked ubiquitin in various substrates. Mediates the specific 'Lys-63'-specific deubiquitination associated with the COP9 signalosome complex (CSN), via the interaction of the BRISC complex with the CSN complex. The BRISC complex is required for normal mitotic spindle assembly and microtubule attachment to kinetochores via its role in deubiquitinating NUMA1. Plays a role in interferon signaling via its role in the deubiquitination of the interferon receptor IFNAR1; deubiquitination increases IFNAR1 activity by enhancing its stability and cell surface expression. Acts as a regulator of the NLRP3 inflammasome by mediating deubiquitination of NLRP3, leading to NLRP3 inflammasome assembly. Down-regulates the response to bacterial lipopolysaccharide (LPS) via its role in IFNAR1 deubiquitination. Deubiquitinates HDAC1 and PWWP2B leading to their stabilization. This chain is Lys-63-specific deubiquitinase BRCC36 (Brcc3), found in Mus musculus (Mouse).